The primary structure comprises 166 residues: Nascent polypeptide-associated complex subunit beta (166 aa).

2 disordered regions span residues 1–40 (MVLNQEKLAKLQAASRTGGKGTPRRKMAPKPKGPGGEDPK) and 129–166 (HAASQAAAAGTKDDDDVPDVVENFDEADKKETEVDKLD). Residues 35-100 (GGEDPKLQAA…GVDKELTELV (66 aa)) form the NAC-A/B domain. The span at 141–153 (DDDDVPDVVENFD) shows a compositional bias: acidic residues. Positions 154–166 (EADKKETEVDKLD) are enriched in basic and acidic residues.

This sequence belongs to the NAC-beta family. In terms of assembly, part of the nascent polypeptide-associated complex (NAC), consisting of EGD2 and EGD1. NAC associates with ribosomes via EGD1.

The protein resides in the cytoplasm. The protein localises to the nucleus. In terms of biological role, component of the nascent polypeptide-associated complex (NAC), a dynamic component of the ribosomal exit tunnel, protecting the emerging polypeptides from interaction with other cytoplasmic proteins to ensure appropriate nascent protein targeting. The NAC complex also promotes mitochondrial protein import by enhancing productive ribosome interactions with the outer mitochondrial membrane and blocks the inappropriate interaction of ribosomes translating non-secretory nascent polypeptides with translocation sites in the membrane of the endoplasmic reticulum. EGD1 may act as a transcription factor that exert a negative effect on the expression of several genes that are transcribed by RNA polymerase II. This chain is Nascent polypeptide-associated complex subunit beta (EGD1), found in Mycosarcoma maydis (Corn smut fungus).